The sequence spans 359 residues: Protein RecA (359 aa).

An ATP-binding site is contributed by 74-81 (GPESSGKT).

The protein belongs to the RecA family.

It is found in the cytoplasm. Can catalyze the hydrolysis of ATP in the presence of single-stranded DNA, the ATP-dependent uptake of single-stranded DNA by duplex DNA, and the ATP-dependent hybridization of homologous single-stranded DNAs. It interacts with LexA causing its activation and leading to its autocatalytic cleavage. This is Protein RecA from Anaplasma marginale (strain St. Maries).